The following is a 344-amino-acid chain: Arginine N-succinyltransferase (344 aa).

Leu125 lines the succinyl-CoA pocket. The Proton donor role is filled by His229.

The protein belongs to the arginine N-succinyltransferase family.

It carries out the reaction succinyl-CoA + L-arginine = N(2)-succinyl-L-arginine + CoA + H(+). It participates in amino-acid degradation; L-arginine degradation via AST pathway; L-glutamate and succinate from L-arginine: step 1/5. In terms of biological role, catalyzes the transfer of succinyl-CoA to arginine to produce N(2)-succinylarginine. The chain is Arginine N-succinyltransferase from Shigella flexneri serotype 5b (strain 8401).